A 434-amino-acid polypeptide reads, in one-letter code: Tol-Pal system protein TolB (434 aa).

An N-terminal signal peptide occupies residues 1 to 21 (MIVRRALALAALALAASPALA). The tract at residues 411 to 434 (GDRQTPVTSGKTDLAAPAWGPLAP) is disordered.

It belongs to the TolB family. The Tol-Pal system is composed of five core proteins: the inner membrane proteins TolA, TolQ and TolR, the periplasmic protein TolB and the outer membrane protein Pal. They form a network linking the inner and outer membranes and the peptidoglycan layer.

The protein resides in the periplasm. Part of the Tol-Pal system, which plays a role in outer membrane invagination during cell division and is important for maintaining outer membrane integrity. In Anaeromyxobacter dehalogenans (strain 2CP-C), this protein is Tol-Pal system protein TolB.